A 624-amino-acid polypeptide reads, in one-letter code: Matrilin-4 (624 aa).

The first 21 residues, 1 to 21 (MRGPCCWPLSLLLLFLQSWET), serve as a signal peptide directing secretion. In terms of domain architecture, VWFA 1 spans 36-215 (DLVFMIDSSR…EFGLQFQGRL (180 aa)). Asparagine 71 carries an N-linked (GlcNAc...) asparagine glycan. EGF-like domains are found at residues 217–257 (GKDL…KNCL), 258–298 (ALDL…RSCR), 299–339 (AIDY…RSCR), and 340–380 (VRDF…KSCD). 12 disulfide bridges follow: cysteine 221–cysteine 232, cysteine 228–cysteine 241, cysteine 243–cysteine 256, cysteine 262–cysteine 273, cysteine 269–cysteine 282, cysteine 284–cysteine 297, cysteine 303–cysteine 314, cysteine 310–cysteine 323, cysteine 325–cysteine 338, cysteine 344–cysteine 355, cysteine 351–cysteine 364, and cysteine 366–cysteine 379. The N-linked (GlcNAc...) asparagine glycan is linked to asparagine 307. Residues 388 to 563 (DLVLLVDGSK…STMTHLLENL (176 aa)) enclose the VWFA 2 domain. Positions 590–623 (EFQGRTLGALESLTQNLARLTERLEELENQLASR) form a coiled coil.

In terms of assembly, interacts with COMP. As to expression, lung, brain, sternum, kidney and heart.

The protein localises to the secreted. In terms of biological role, major component of the extracellular matrix of cartilage. The chain is Matrilin-4 (Matn4) from Mus musculus (Mouse).